The chain runs to 387 residues: Gamma-butyrobetaine dioxygenase (387 aa).

Zn(2+)-binding residues include cysteine 38, cysteine 40, cysteine 43, and histidine 82. Residues histidine 202, aspartate 204, and histidine 347 each contribute to the Fe cation site. Serine 351 bears the Phosphoserine mark.

The protein belongs to the gamma-BBH/TMLD family. Requires Fe(2+) as cofactor. The cofactor is L-ascorbate. As to expression, highly expressed in kidney; moderately expressed in liver; very low expression in brain.

Its subcellular location is the cytoplasm. The catalysed reaction is 4-(trimethylamino)butanoate + 2-oxoglutarate + O2 = carnitine + succinate + CO2. The protein operates within amine and polyamine biosynthesis; carnitine biosynthesis. Catalyzes the formation of L-carnitine from gamma-butyrobetaine. The protein is Gamma-butyrobetaine dioxygenase (BBOX1) of Homo sapiens (Human).